Here is a 1499-residue protein sequence, read N- to C-terminus: Phospholipid-transporting ATPase VA (1499 aa).

Residues M1–R53 are disordered. The Cytoplasmic portion of the chain corresponds to M1–P86. Basic residues predominate over residues G15 to T26. A helical transmembrane segment spans residues A87 to F106. Residues Q107–L110 lie on the Exoplasmic loop side of the membrane. The chain crosses the membrane as a helical span at residues A111–W128. The Cytoplasmic portion of the chain corresponds to E129 to D309. The chain crosses the membrane as a helical span at residues V310–I332. Residues W333–F362 are Exoplasmic loop-facing. A helical transmembrane segment spans residues L363 to V384. The Cytoplasmic portion of the chain corresponds to K385 to N1087. D427 (4-aspartylphosphate intermediate) is an active-site residue. Residues D427, K428, and T429 each contribute to the ATP site. D427 provides a ligand contact to Mg(2+). Residue T429 coordinates Mg(2+). Positions A464–I531 are disordered. S466 carries the phosphoserine modification. Residues S477–T499 show a composition bias toward polar residues. Residues E700, F742, K766, R809, T889, G890, D891, R1005, and K1011 each contribute to the ATP site. Residue D1031 coordinates Mg(2+). The ATP site is built by N1034 and D1035. Residue D1035 coordinates Mg(2+). A helical transmembrane segment spans residues M1088–F1108. The Exoplasmic loop portion of the chain corresponds to F1109–D1119. Residues Q1120 to V1140 traverse the membrane as a helical segment. At L1141–T1170 the chain is on the cytoplasmic side. The helical transmembrane segment at F1171–A1192 threads the bilayer. Over Y1193–D1199 the chain is Exoplasmic loop. Residues L1200–E1222 traverse the membrane as a helical segment. Residues T1223–W1228 are Cytoplasmic-facing. Residues L1229 to N1249 form a helical membrane-spanning segment. Over A1250 to A1267 the chain is Exoplasmic loop. Residues L1268 to F1292 traverse the membrane as a helical segment. The Cytoplasmic segment spans residues R1293–Q1499. Disordered stretches follow at residues T1311–H1356 and D1464–Q1499. Residues L1330–S1340 are compositionally biased toward basic and acidic residues. Polar residues predominate over residues G1341–H1356.

The protein belongs to the cation transport ATPase (P-type) (TC 3.A.3) family. Type IV subfamily. In terms of assembly, component of a P4-ATPase flippase complex which consists of a catalytic alpha subunit ATP10A and an accessory beta subunit TMEM30A. It depends on Mg(2+) as a cofactor. Autophosphorylated at the conserved aspartate of the P-type ATPase signature sequence. Widely expressed, with highest levels in kidney, followed by lung, brain, prostate, testis, ovary and small intestine.

Its subcellular location is the cell membrane. It is found in the endoplasmic reticulum membrane. The enzyme catalyses ATP + H2O + phospholipidSide 1 = ADP + phosphate + phospholipidSide 2.. It carries out the reaction a 1,2-diacyl-sn-glycero-3-phosphocholine(out) + ATP + H2O = a 1,2-diacyl-sn-glycero-3-phosphocholine(in) + ADP + phosphate + H(+). It catalyses the reaction a beta-D-glucosyl-(1&lt;-&gt;1')-N-acylsphing-4-enine(out) + ATP + H2O = a beta-D-glucosyl-(1&lt;-&gt;1')-N-acylsphing-4-enine(in) + ADP + phosphate + H(+). With respect to regulation, inhibited under hypotonic conditions. Its function is as follows. Catalytic component of P4-ATPase flippase complex, which catalyzes the hydrolysis of ATP coupled to the transport of phosphatidylcholine (PC) from the outer to the inner leaflet of the plasma membrane. Initiates inward plasma membrane bending and recruitment of Bin/amphiphysin/Rvs (BAR) domain-containing proteins involved in membrane tubulation and cell trafficking. Facilitates ITGB1/beta1 integrin endocytosis, delaying cell adhesion and cell spreading on extracellular matrix. Has low flippase activity toward glucosylceramide (GlcCer). This Homo sapiens (Human) protein is Phospholipid-transporting ATPase VA.